Here is a 223-residue protein sequence, read N- to C-terminus: PRA1 family protein B5 (223 aa).

5 helical membrane passes run 83–103 (SSYFRVNYVCIVALILGFSLL), 105–125 (HPFSLILLLCLAASWLFLYLF), 146–166 (GGLILSTIAVIFFTSVGSVLI), 170–190 (MIGIATICVHGAFRAPDDLFL), and 196–216 (AASGFLSFIGVPAIPSVAPSA).

Belongs to the PRA1 family. In terms of assembly, interacts with PRA1B1, PRA1B2, PRA1B3, PRA1B4, PRA1B6 and PRA1E. In terms of tissue distribution, expressed in roots, lateral roots, lateral root caps, columella cells, leaves, and shoot apex.

The protein localises to the endosome membrane. Functionally, may be involved in both secretory and endocytic intracellular trafficking in the endosomal/prevacuolar compartments. The sequence is that of PRA1 family protein B5 (PRA1B5) from Arabidopsis thaliana (Mouse-ear cress).